A 466-amino-acid polypeptide reads, in one-letter code: MRTQWVSARKGQANVSQMHYARKGVVTEEMAYVAKRENLPESLIMEEVARGRMIIPANINHTNLEPMAIGIASSCKVNANIGASPNASDAAEEVNKLKLAVKYGADTVMDLSTGGVNLDEVRTAIIGASPVPIGTVPVYQALESVHGSIEKLDEDDFLHIIEKHCQQGVDYQTIHAGLLIEHLPKVKGRITGIVSRGGGILAQWMLYHHRQNPLFTRFDDICEIFKRYDCTFSLGDSLRPGCQHDASDAAQLAELKTLGELTRRAWKHDVQVMVEGPGHVPLDQIEFNVKKQMEECNEAPFYVLGPLVTDIAPGYDHITSAIGAAMAGWHGTAMLCYVTPKEHLGLPNAEDVREGLIAYKIAAHAADIARHRPGARDRDDELSRARYAFDWNKQFELSLDPERAKEYHDETLPADIYKQAEFCSMCGPKHCPMQTKITDEDLEGLQKVLESQGAAELASVKLDKAE.

Substrate is bound by residues Asn-80, Met-109, Tyr-139, His-175, Ser-195–Gly-197, Asp-236–Arg-239, and Glu-275. Zn(2+) is bound at residue His-279. Tyr-302 contributes to the substrate binding site. His-343 is a Zn(2+) binding site. [4Fe-4S] cluster-binding residues include Cys-423, Cys-426, and Cys-431.

The protein belongs to the ThiC family. [4Fe-4S] cluster serves as cofactor.

The catalysed reaction is 5-amino-1-(5-phospho-beta-D-ribosyl)imidazole + S-adenosyl-L-methionine = 4-amino-2-methyl-5-(phosphooxymethyl)pyrimidine + CO + 5'-deoxyadenosine + formate + L-methionine + 3 H(+). It functions in the pathway cofactor biosynthesis; thiamine diphosphate biosynthesis. In terms of biological role, catalyzes the synthesis of the hydroxymethylpyrimidine phosphate (HMP-P) moiety of thiamine from aminoimidazole ribotide (AIR) in a radical S-adenosyl-L-methionine (SAM)-dependent reaction. The chain is Phosphomethylpyrimidine synthase from Synechococcus sp. (strain CC9902).